A 289-amino-acid polypeptide reads, in one-letter code: Probable early E4 33 kDa protein (289 aa).

The protein belongs to the adenoviridae E4 30 to 34 kDa protein family. Interacts with E1B-55k.

It localises to the host nucleus. Its subcellular location is the host cytoplasm. Its function is as follows. Plays a major role to prevent cellular inhibition of viral genome replication by nuclear bodies. Assembles an SCF-like E3 ubiquitin ligase complex based on the cellular proteins ELOB, ELOC, CUL5 and RBX1, in cooperation with viral E1B-55K. This viral RING-type ligase ubiquitinates cellular substrates prior to proteasomal degradation: p53/TP53, LIG4, MRE11-RAD50-NBS1 (MRN) complex, ITGA3, DAXX and BLM. In Mus musculus (Mouse), this protein is Probable early E4 33 kDa protein.